The following is a 335-amino-acid chain: Zinc-type alcohol dehydrogenase-like protein SAR2277 (335 aa).

This sequence belongs to the zinc-containing alcohol dehydrogenase family. Quinone oxidoreductase subfamily.

The polypeptide is Zinc-type alcohol dehydrogenase-like protein SAR2277 (Staphylococcus aureus (strain MRSA252)).